Reading from the N-terminus, the 178-residue chain is MSTIAKDQTQINDRIRAKELRLIGHDGEQLGVKTKFEAIEIAERVNLDVVLVAPNAKPPVAKIMDYGKFKFEQQKKEKEARKKQKVVTVKEIRLSPTIEDHDFNTKLKNARKFLEKEDKVKVSIRFRGRAITHKEFGQRVLEKFAEECKDLATVEQKPKMDGRSMFLMLAPIVDKKQN.

It belongs to the IF-3 family. In terms of assembly, monomer.

It localises to the cytoplasm. In terms of biological role, IF-3 binds to the 30S ribosomal subunit and shifts the equilibrium between 70S ribosomes and their 50S and 30S subunits in favor of the free subunits, thus enhancing the availability of 30S subunits on which protein synthesis initiation begins. The chain is Translation initiation factor IF-3 from Macrococcus caseolyticus (strain JCSC5402) (Macrococcoides caseolyticum).